The chain runs to 635 residues: Probable potassium transport system protein Kup (635 aa).

The next 12 helical transmembrane spans lie at 22–42 (LVIGAIGVVFGDIGTSPLYTL), 59–79 (VLGILSLVFWALMLVVTLKYV), 111–131 (MYVVGILGIFGASLFFGDGVI), 148–168 (APKLEAFVVPITLVVLGMLFL), 180–200 (AFGPITLVWFFALGAIGVYNM), 216–236 (VLFFVEHNWHAVFVLGAVVLA), 259–279 (WQFVVLPMLTLTYLGQGALVL), 297–317 (ALYPMIVLATAATVIASQALI), 349–369 (IYVPAVNWCLLLAVAVAVVGF), 378–398 (AYGVSVTGTMLITTVLMVIYA), 404–424 (VPAPLLWLFALVFLAVDCAFF), and 428–448 (IIKFLDGAWFPLLLGLILFTL).

This sequence belongs to the HAK/KUP transporter (TC 2.A.72) family.

It is found in the cell inner membrane. The catalysed reaction is K(+)(in) + H(+)(in) = K(+)(out) + H(+)(out). Its function is as follows. Transport of potassium into the cell. Likely operates as a K(+):H(+) symporter. The sequence is that of Probable potassium transport system protein Kup from Xanthomonas oryzae pv. oryzae (strain KACC10331 / KXO85).